A 151-amino-acid polypeptide reads, in one-letter code: Multiprotein-bridging factor 1 (151 aa).

The segment at 1 to 32 is disordered; that stretch reads MSSDWDSVTIIGQKARVGGGGPRENVAKTSSQ. The region spanning 86-140 is the HTH cro/C1-type domain; sequence IQQARQEKKLTQKELATKVNEKPNVINDYEAGRAIPNQQLLAKLERALGVKLRGK. Residues 97 to 116 constitute a DNA-binding region (H-T-H motif); sequence QKELATKVNEKPNVINDYEA.

This sequence belongs to the MBF1 family.

Functionally, transcriptional coactivator that stimulates GCN4-dependent transcriptional activity by bridging the DNA-binding region of GCN4 and TBP (SPT15), thereby recruiting TBP to GCN4-bound promoters. Involved in induction of the ribosome quality control (RQC) pathway; a pathway that degrades nascent peptide chains during problematic translation. Required to prevent stalled ribosomes from frameshifting. This Candida albicans (strain SC5314 / ATCC MYA-2876) (Yeast) protein is Multiprotein-bridging factor 1 (MBF1).